A 131-amino-acid polypeptide reads, in one-letter code: Profilin-7 (131 aa).

An intrachain disulfide couples C13 to C115. Positions A81–T97 match the Involved in PIP2 interaction motif. T111 bears the Phosphothreonine mark.

This sequence belongs to the profilin family. In terms of assembly, occurs in many kinds of cells as a complex with monomeric actin in a 1:1 ratio. In terms of processing, phosphorylated by MAP kinases.

It localises to the cytoplasm. The protein resides in the cytoskeleton. Binds to actin and affects the structure of the cytoskeleton. At high concentrations, profilin prevents the polymerization of actin, whereas it enhances it at low concentrations. This chain is Profilin-7, found in Phleum pratense (Common timothy).